The primary structure comprises 713 residues: Cyclomaltodextrin glucanotransferase (713 aa).

Positions 1-27 (MKKFLKSTAALALGLSLTFGLFSPAQA) are cleaved as a signal peptide. Residues 28-165 (APDTSVSNKQ…NIKVIIDFAP (138 aa)) form an A1 region. Residues aspartate 54, asparagine 56, asparagine 59, and asparagine 60 each coordinate Ca(2+). Cysteine 70 and cysteine 77 form a disulfide bridge. Positions 78 and 80 each coordinate Ca(2+). 127–128 (YW) serves as a coordination point for substrate. Residue asparagine 166 participates in Ca(2+) binding. Residues 166-229 (NHTSPASSDQ…NLYDLADLNH (64 aa)) are b. Substrate-binding positions include histidine 167 and 172–174 (SSD). A Ca(2+)-binding site is contributed by isoleucine 217. 220-223 (NLYD) serves as a coordination point for substrate. Position 226 (aspartate 226) interacts with Ca(2+). The A2 stretch occupies residues 230 to 433 (NNSTVDVYLK…LRKCNPAIAY (204 aa)). Arginine 254 contributes to the substrate binding site. Residue aspartate 256 is the Nucleophile of the active site. 259–260 (KH) lines the substrate pocket. Histidine 260 is a binding site for Ca(2+). The active-site Proton donor is the glutamate 284. Alanine 342 serves as a coordination point for Ca(2+). Substrate-binding residues include histidine 354, aspartate 398, and arginine 402. Positions 434–522 (GSTQERWINN…GTAVWQYTAA (89 aa)) are c. Positions 523-609 (TATPTIGHVG…SNVYDNFEVL (87 aa)) are d. Residues 526-607 (PTIGHVGPMM…TASNVYDNFE (82 aa)) enclose the IPT/TIG domain. Aspartate 604 contacts Ca(2+). The 106-residue stretch at 608–713 (VLSGDQVSVR…TATINVNWQP (106 aa)) folds into the CBM20 domain. Residues 610-713 (SGDQVSVRFV…TATINVNWQP (104 aa)) form an e region.

This sequence belongs to the glycosyl hydrolase 13 family. As to quaternary structure, monomer. Ca(2+) is required as a cofactor.

The protein resides in the secreted. It catalyses the reaction Cyclizes part of a (1-&gt;4)-alpha-D-glucan chain by formation of a (1-&gt;4)-alpha-D-glucosidic bond.. The polypeptide is Cyclomaltodextrin glucanotransferase (cgt) (Niallia circulans (Bacillus circulans)).